A 278-amino-acid chain; its full sequence is Undecaprenyl-diphosphatase 1 (278 aa).

5 helical membrane passes run 85–105 (LNVIIATIPAIVLGLLFEKTI), 108–128 (ALFSPVPVAFALVAGGVVILW), 188–208 (VATEFSFFLAIPIIFGATAYE), 218–238 (VDALGTFALGFVAAFVSAFAC), and 254–274 (FAWYRIGFGLLILLVGYSGAL).

This sequence belongs to the UppP family.

It localises to the cell inner membrane. It catalyses the reaction di-trans,octa-cis-undecaprenyl diphosphate + H2O = di-trans,octa-cis-undecaprenyl phosphate + phosphate + H(+). Its function is as follows. Catalyzes the dephosphorylation of undecaprenyl diphosphate (UPP). Confers resistance to bacitracin. In Paraburkholderia xenovorans (strain LB400), this protein is Undecaprenyl-diphosphatase 1.